The sequence spans 389 residues: Cellobiose 2-epimerase (389 aa).

This sequence belongs to the cellobiose 2-epimerase family.

It is found in the cytoplasm. It carries out the reaction D-cellobiose = beta-D-glucosyl-(1-&gt;4)-D-mannopyranose. Its activity is regulated as follows. Enhanced by Mg(2+) and Ca(2+) ions, ethylenediaminetetraacetic acid, ethylene glycol tetraacetic acid and citrate. Inhibited by Al(3+), Fe(3+), Co(2+), Cu(2+), Zn(2+), Pb(2+) and Ag(+) ions, iodoacetate, 4-chloromercuribenzoate and N-bromosuccinimide. Catalyzes the reversible epimerization of cellobiose to 4-O-beta-D-glucopyranosyl-D-mannose (Glc-Man). Can also epimerize cellotriose to Glc-Glc-Man, cellotetraose to Glc-Glc-Glc-Man, and lactose to epilactose. In Ruminococcus albus, this protein is Cellobiose 2-epimerase (ce-ne1).